A 195-amino-acid polypeptide reads, in one-letter code: GTP cyclohydrolase 1 (195 aa).

Zn(2+)-binding residues include cysteine 86, histidine 89, and cysteine 158.

This sequence belongs to the GTP cyclohydrolase I family. As to quaternary structure, homomer.

The catalysed reaction is GTP + H2O = 7,8-dihydroneopterin 3'-triphosphate + formate + H(+). It functions in the pathway cofactor biosynthesis; 7,8-dihydroneopterin triphosphate biosynthesis; 7,8-dihydroneopterin triphosphate from GTP: step 1/1. The protein is GTP cyclohydrolase 1 of Ruminiclostridium cellulolyticum (strain ATCC 35319 / DSM 5812 / JCM 6584 / H10) (Clostridium cellulolyticum).